A 1262-amino-acid polypeptide reads, in one-letter code: Unconventional myosin-VI (1262 aa).

In terms of domain architecture, Myosin N-terminal SH3-like spans 2 to 53 (EDGKPVWAPHPTDGFQMGNIVDIGPDSLTIEPLNQKGKTFLALINQVFPAEE). The region spanning 57 to 771 (KDVEDNCSLM…KFAEFDQIMK (715 aa)) is the Myosin motor domain. Residue 151–158 (GESGAGKT) coordinates ATP. The residue at position 267 (serine 267) is a Phosphoserine. The segment at 273–317 (YLNRGCTRFFANKETDKQILQNRKSPEYVKAGSLKDPLLDDHGDF) is responsible for slow ATPase activity. Residue threonine 405 is modified to Phosphothreonine. Serine 604 is modified (phosphoserine). Actin-binding regions lie at residues 651-673 (LNLLLDKLRSTGASFIRCIKPNL) and 665-672 (FIRCIKPN). Residues 782–810 (KRVNLWLVCSRWKKVQWCSLSVIKLKNKI) form a required for binding calmodulin region. Residues 814–834 (AEACIKMQKTIRMWLCKRRHK) form the IQ domain. The segment at 835 to 916 (PRIDGLVKVG…EDLLSALQKK (82 aa)) is three-helix bundle. A coiled-coil region spans residues 864–984 (KPEVNRQIKN…EDDEKRIQAE (121 aa)). The tract at residues 917-984 (KQQEEEAERL…EDDEKRIQAE (68 aa)) is SAH. A disordered region spans residues 933–955 (MEKERKRREEDEERRRKEEEERR). Serine 1025 bears the Phosphoserine mark. Positions 1034 to 1253 (LRRGPAVQAT…ESRQARPTYA (220 aa)) are interaction with TAX1BP1 and CALCOCO2/NDP52. The interaction with OPTN stretch occupies residues 1084–1086 (RRL). Serine 1123 carries the post-translational modification Phosphoserine. The tract at residues 1125-1253 (QQNPAAQLPA…ESRQARPTYA (129 aa)) is interaction with TOM1.

The protein belongs to the TRAFAC class myosin-kinesin ATPase superfamily. Myosin family. As to quaternary structure, homodimer; dimerization seems to implicate the unfolding of the three-helix bundle region creating an additional calmodulin binding site, and cargo binding. Able to function as a monomer under specific conditions in vitro. Forms a complex with CFTR and DAB2 in the apical membrane of epithelial cells. Component of the DISP/DOCK7-induced septin displacement complex, at least composed of DOCK7, LRCH3 and MYO6. Binding to calmodulin through a unique insert, not found in other myosins, located in the neck region between the motor domain and the IQ domain appears to contribute to the directionality reversal. This interaction occurs only if the C-terminal lobe of calmodulin is occupied by calcium. Interaction with F-actin/ACTN1 occurs only at the apical brush border domain of the proximal tubule cells. Interacts with DAB2. In vitro, the C-terminal globular tail binds a C-terminal region of DAB2. Interacts with CFTR. Interacts with CABP5. Interacts (via residues 1128-1256) with TOM1 (via residues 392-463). Interacts (via residues 1060-1285) with OPTN. Interacts (via residues 1060-1285) with TAX1BP1 and CALCOCO2/NDP52. Interacts with TOM1L2. Interacts with CLIC5; may work together in a complex which also includes RDX and MYO6 to stabilize linkages between the plasma membrane and subjacent actin cytoskeleton at the base of stereocilia. In terms of processing, phosphorylation in the motor domain, induced by EGF, results in translocation of MYO6 from the cell surface to membrane ruffles and affects F-actin dynamics. Phosphorylated in vitro by p21-activated kinase (PAK). In terms of tissue distribution, within the cochlea, expressed specifically within the sensory hair cells (at protein level). Expressed in the inner and outer plexiform layer of the retina (at protein level). Widely expressed. Expressed in the brain, kidney, liver, and testis.

The protein resides in the golgi apparatus. It localises to the trans-Golgi network membrane. The protein localises to the nucleus. Its subcellular location is the cytoplasm. It is found in the perinuclear region. The protein resides in the membrane. It localises to the clathrin-coated pit. The protein localises to the cytoplasmic vesicle. Its subcellular location is the clathrin-coated vesicle. It is found in the cell projection. The protein resides in the filopodium. It localises to the ruffle membrane. The protein localises to the microvillus. Its subcellular location is the cytosol. In terms of biological role, myosins are actin-based motor molecules with ATPase activity. Unconventional myosins serve in intracellular movements. Myosin 6 is a reverse-direction motor protein that moves towards the minus-end of actin filaments. Has slow rate of actin-activated ADP release due to weak ATP binding. Functions in a variety of intracellular processes such as vesicular membrane trafficking and cell migration. Required for the structural integrity of the Golgi apparatus via the p53-dependent pro-survival pathway. Appears to be involved in a very early step of clathrin-mediated endocytosis in polarized epithelial cells. Together with TOM1, mediates delivery of endocytic cargo to autophagosomes thereby promoting autophagosome maturation and driving fusion with lysosomes. Links TOM1 with autophagy receptors, such as TAX1BP1; CALCOCO2/NDP52 and OPTN. May act as a regulator of F-actin dynamics. As part of the DISP complex, may regulate the association of septins with actin and thereby regulate the actin cytoskeleton. May play a role in transporting DAB2 from the plasma membrane to specific cellular targets. May play a role in the extension and network organization of neurites. Required for structural integrity of inner ear hair cells. Required for the correct localization of CLIC5 and RDX at the stereocilium base. Modulates RNA polymerase II-dependent transcription. The chain is Unconventional myosin-VI (Myo6) from Mus musculus (Mouse).